Consider the following 1132-residue polypeptide: Protein sel-1 homolog 3 (1132 aa).

The tract at residues 1–24 is disordered; sequence MQRRGAGLGWPRQQQQQPPPLAVG. N-linked (GlcNAc...) asparagine glycans are attached at residues Asn201, Asn382, and Asn527. 7 Sel1-like repeats span residues 575–609, 611–647, 694–730, 732–767, 768–800, 801–839, and 840–877; these read YLAV…RLSS, NLGY…DQHT, RLAQ…PALI, DYAI…QAVN, GLGW…DASY, NLGV…EGTL, and WCSL…LGHV. At Ser608 the chain carries Phosphoserine. Residue Asn937 is glycosylated (N-linked (GlcNAc...) asparagine). The Sel1-like 8 repeat unit spans residues 952 to 988; that stretch reads KMGDLYYYGHQNQSQDLELSVQMYAQAALDGDSQGFF. Residues 1057 to 1077 traverse the membrane as a helical segment; that stretch reads ILHSALIYFLGTFLLSILIAW. The interval 1087 to 1132 is disordered; that stretch reads ASDPPPRPSQASPDTATSTASPAVTPAADASDQDQPTVTNNPEPRG. Positions 1097–1116 are enriched in low complexity; it reads ASPDTATSTASPAVTPAADA. Polar residues predominate over residues 1119–1132; the sequence is QDQPTVTNNPEPRG.

Its subcellular location is the membrane. This is Protein sel-1 homolog 3 (SEL1L3) from Homo sapiens (Human).